The following is a 217-amino-acid chain: Uracil-DNA glycosylase (217 aa).

The active-site Proton acceptor is D62.

It belongs to the uracil-DNA glycosylase (UDG) superfamily. UNG family.

It is found in the cytoplasm. The catalysed reaction is Hydrolyzes single-stranded DNA or mismatched double-stranded DNA and polynucleotides, releasing free uracil.. Excises uracil residues from the DNA which can arise as a result of misincorporation of dUMP residues by DNA polymerase or due to deamination of cytosine. The sequence is that of Uracil-DNA glycosylase from Streptococcus equi subsp. zooepidemicus (strain MGCS10565).